Reading from the N-terminus, the 147-residue chain is Large ribosomal subunit protein uL15 (147 aa).

The tract at residues 16–63 is disordered; the sequence is SSRARVGRGIGSGLGKTAGRGHKGSFARKGGGKIKPGFEGGQTPMQRR. The segment covering 23–33 has biased composition (gly residues); the sequence is RGIGSGLGKTA. Positions 34-47 are enriched in basic residues; that stretch reads GRGHKGSFARKGGG.

This sequence belongs to the universal ribosomal protein uL15 family. In terms of assembly, part of the 50S ribosomal subunit.

Functionally, binds to the 23S rRNA. The chain is Large ribosomal subunit protein uL15 from Xylella fastidiosa (strain Temecula1 / ATCC 700964).